A 95-amino-acid chain; its full sequence is Small ribosomal subunit protein uS19 (95 aa).

The protein belongs to the universal ribosomal protein uS19 family.

Its function is as follows. Protein S19 forms a complex with S13 that binds strongly to the 16S ribosomal RNA. The sequence is that of Small ribosomal subunit protein uS19 from Thermosipho melanesiensis (strain DSM 12029 / CIP 104789 / BI429).